Reading from the N-terminus, the 174-residue chain is RNA pyrophosphohydrolase (174 aa).

The Nudix hydrolase domain maps to 6 to 149 (GYRPNVGIIL…KRDVYLGALK (144 aa)). The short motif at 38–59 (GGIKPGESPETAMYRELYEEVG) is the Nudix box element.

It belongs to the Nudix hydrolase family. RppH subfamily. The cofactor is a divalent metal cation.

Accelerates the degradation of transcripts by removing pyrophosphate from the 5'-end of triphosphorylated RNA, leading to a more labile monophosphorylated state that can stimulate subsequent ribonuclease cleavage. In Neisseria meningitidis serogroup B (strain ATCC BAA-335 / MC58), this protein is RNA pyrophosphohydrolase.